Here is a 236-residue protein sequence, read N- to C-terminus: Putative glutamine amidotransferase-like protein YvdE (236 aa).

A Glutamine amidotransferase type-1 domain is found at 17-236 (SPFWWNKVSY…IFEIFANGTI (220 aa)).

The protein is Putative glutamine amidotransferase-like protein YvdE (yvdE) of Lactococcus lactis subsp. lactis (strain IL1403) (Streptococcus lactis).